A 561-amino-acid polypeptide reads, in one-letter code: DNA ligase B (561 aa).

The active-site N6-AMP-lysine intermediate is K125.

The protein belongs to the NAD-dependent DNA ligase family. LigB subfamily.

It catalyses the reaction NAD(+) + (deoxyribonucleotide)n-3'-hydroxyl + 5'-phospho-(deoxyribonucleotide)m = (deoxyribonucleotide)n+m + AMP + beta-nicotinamide D-nucleotide.. Catalyzes the formation of phosphodiester linkages between 5'-phosphoryl and 3'-hydroxyl groups in double-stranded DNA using NAD as a coenzyme and as the energy source for the reaction. The sequence is that of DNA ligase B from Salmonella arizonae (strain ATCC BAA-731 / CDC346-86 / RSK2980).